A 323-amino-acid polypeptide reads, in one-letter code: Sphingolipid delta(4)-desaturase/C4-monooxygenase DES2 (323 aa).

The N-myristoyl glycine moiety is linked to residue G2. 2 helical membrane passes run 41 to 61 and 68 to 88; these read PHIK…CWLV and WLLF…TLAI. A Histidine box-1 motif is present at residues 89–93; the sequence is HDISH. A required for C4-hydroxylase activity region spans residues 95–99; sequence TAFGT. Positions 128-132 match the Histidine box-2 motif; it reads HVDHH. Residues 210-231 form a helical membrane-spanning segment; sequence VYLLGSSLLGLGLHPISGHFVA. The Histidine box-3 signature appears at 259–263; the sequence is HMEHH.

It belongs to the fatty acid desaturase type 1 family. DEGS subfamily. As to expression, highly expressed in intestinal crypt cells and adjacent epithelial cells (at protein level).

It is found in the endoplasmic reticulum membrane. It carries out the reaction a dihydroceramide + 2 Fe(II)-[cytochrome b5] + O2 + 2 H(+) = a phytoceramide + 2 Fe(III)-[cytochrome b5] + H2O. The enzyme catalyses an N-acylsphinganine + 2 Fe(II)-[cytochrome b5] + O2 + 2 H(+) = an N-acylsphing-4-enine + 2 Fe(III)-[cytochrome b5] + 2 H2O. The catalysed reaction is an N-acylsphinganine + 2 Fe(II)-[cytochrome b5] + O2 + 2 H(+) = an N-acyl-(4R)-4-hydroxysphinganine + 2 Fe(III)-[cytochrome b5] + H2O. It catalyses the reaction N-octanoylsphinganine + 2 Fe(II)-[cytochrome b5] + O2 + 2 H(+) = N-octanoyl-4-hydroxysphinganine + 2 Fe(III)-[cytochrome b5] + H2O. Its pathway is membrane lipid metabolism; sphingolipid biosynthesis. In terms of biological role, bifunctional enzyme which acts both as a sphingolipid delta(4)-desaturase and a sphingolipid C4-monooxygenase. This is Sphingolipid delta(4)-desaturase/C4-monooxygenase DES2 from Mus musculus (Mouse).